A 302-amino-acid chain; its full sequence is D-alanine--D-alanine ligase (302 aa).

One can recognise an ATP-grasp domain in the interval 104 to 296 (KLVFERFAIP…FPDLVTWLVE (193 aa)). 130–183 (AMARPYVVKPLDQGSSVGVTIVTSETNDLPFSRDDWPYGRQVMVERFIPGRELT) serves as a coordination point for ATP. D251, E263, and N265 together coordinate Mg(2+).

The protein belongs to the D-alanine--D-alanine ligase family. Mg(2+) is required as a cofactor. It depends on Mn(2+) as a cofactor.

The protein resides in the cytoplasm. The enzyme catalyses 2 D-alanine + ATP = D-alanyl-D-alanine + ADP + phosphate + H(+). It functions in the pathway cell wall biogenesis; peptidoglycan biosynthesis. Its function is as follows. Cell wall formation. The protein is D-alanine--D-alanine ligase of Rhodospirillum rubrum (strain ATCC 11170 / ATH 1.1.1 / DSM 467 / LMG 4362 / NCIMB 8255 / S1).